Reading from the N-terminus, the 69-residue chain is Putative transmembrane protein ORF34 (69 aa).

Helical transmembrane passes span 7–27 and 42–62; these read LLSV…MMQF and VSLM…IVYF.

It localises to the host membrane. This is Putative transmembrane protein ORF34 from Haloarcula hispanica (His1V).